Reading from the N-terminus, the 445-residue chain is Probable glycine dehydrogenase (decarboxylating) subunit 1 (445 aa).

The protein belongs to the GcvP family. N-terminal subunit subfamily. In terms of assembly, the glycine cleavage system is composed of four proteins: P, T, L and H. In this organism, the P 'protein' is a heterodimer of two subunits.

It catalyses the reaction N(6)-[(R)-lipoyl]-L-lysyl-[glycine-cleavage complex H protein] + glycine + H(+) = N(6)-[(R)-S(8)-aminomethyldihydrolipoyl]-L-lysyl-[glycine-cleavage complex H protein] + CO2. Its function is as follows. The glycine cleavage system catalyzes the degradation of glycine. The P protein binds the alpha-amino group of glycine through its pyridoxal phosphate cofactor; CO(2) is released and the remaining methylamine moiety is then transferred to the lipoamide cofactor of the H protein. This chain is Probable glycine dehydrogenase (decarboxylating) subunit 1, found in Anaeromyxobacter sp. (strain Fw109-5).